The sequence spans 89 residues: Small ribosomal subunit protein uS15 (89 aa).

The protein belongs to the universal ribosomal protein uS15 family. Part of the 30S ribosomal subunit. Forms a bridge to the 50S subunit in the 70S ribosome, contacting the 23S rRNA.

In terms of biological role, one of the primary rRNA binding proteins, it binds directly to 16S rRNA where it helps nucleate assembly of the platform of the 30S subunit by binding and bridging several RNA helices of the 16S rRNA. Forms an intersubunit bridge (bridge B4) with the 23S rRNA of the 50S subunit in the ribosome. This chain is Small ribosomal subunit protein uS15, found in Psychromonas ingrahamii (strain DSM 17664 / CCUG 51855 / 37).